We begin with the raw amino-acid sequence, 61 residues long: Large ribosomal subunit protein uL30 (61 aa).

Belongs to the universal ribosomal protein uL30 family. As to quaternary structure, part of the 50S ribosomal subunit.

In Shewanella piezotolerans (strain WP3 / JCM 13877), this protein is Large ribosomal subunit protein uL30.